The primary structure comprises 296 residues: Circadian clock oscillator protein KaiA (296 aa).

The interval 2-133 (ARPGLTIALL…LRQGRADGRS (132 aa)) is psR domain, binds oxidized quinones. The KaiA N-terminal domain maps to 2-152 (ARPGLTIALL…KLSRRLQERL (151 aa)). The segment at 153 to 161 (GYLGVFYKR) is flexible linker. The region spanning 162–270 (DPSRFLGSLP…CEMYRRSIPP (109 aa)) is the KaiA C-terminal domain.

Homodimer. The KaiABC complex composition changes during the circadian cycle to control KaiC phosphorylation. Complexes KaiC(6), KaiA(2-4):KaiC(6), KaiB(6):KaiC(6) and KaiC(6):KaiB(6):KaiA(12) are among the most important forms, many form cooperatively. KaiA and CikA bind to the same region of the KaiB(fs) form and therefore compete.

Functionally, key component of the KaiABC oscillator complex, which constitutes the main circadian regulator in cyanobacteria. Complex composition changes during the circadian cycle to control KaiC phosphorylation. KaiA stimulates KaiC autophosphorylation, while KaiB sequesters KaiA, leading to KaiC autodephosphorylation. KaiA binding to the KaiC CII domain during the subjective day yields KaiA(2-4):KaiC(6) complexes which stimulate KaiC autophosphorylation. Phospho-Ser-431 KaiC accumulation triggers binding of KaiB during the subjective night to form the KaiB(6):KaiC(6) complex, leading to changes in the output regulators CikA and SasA. KaiB(6):KaiC(6) formation exposes a site for KaiA binding on KaiB that sequesters KaiA from KaiC's CII domain, making the KaiC(6):KaiB(6):KaiA(12) complex resulting in KaiC autodephosphorylation. Complete dephosphorylation of KaiC leads to dissociation of KaiA(2):KaiB(1), completing 1 cycle of the Kai oscillator. In terms of biological role, binds oxidized quinones via the N-terminal PsR domain, allowing it to sense redox changes and possibly mediate clock input. This Parasynechococcus marenigrum (strain WH8102) protein is Circadian clock oscillator protein KaiA.